The primary structure comprises 60 residues: Ixodegrin-like peptide (60 aa).

The signal sequence occupies residues 1 to 21; it reads MNAAFIAALLILGALTLDAMA. A Cell attachment site motif is present at residues 49 to 51; that stretch reads RGD.

Belongs to the ixodegrin family. In terms of processing, contains 3 disulfide bonds. As to expression, expressed in salivary glands.

The protein localises to the secreted. In terms of biological role, tick salivary platelet aggregation inhibitor that plays an important part in the anti-hemostatic strategy of ticks. Inhibits platelet aggregation induced by ADP, thrombin and thromboxane A2 (TXA2). Blocks platelet adhesion to soluble collagen (most probably through the binding to alpha-2/beta-1 integrin (ITGA2/ITGB1)) and binds to purified glycoprotein IIb/IIIa (ITGA2B/ITGB3) in a dose-dependent manner. In vivo, reduces thrombus weight effectively in a rat arteriovenous shunt model and inhibits thrombosis in a carrageenan-induced mouse tail thrombosis model. The chain is Ixodegrin-like peptide from Ixodes scapularis (Black-legged tick).